We begin with the raw amino-acid sequence, 1040 residues long: DNA cross-link repair 1A protein (1040 aa).

The segment at 1–190 is nuclear localization region; the sequence is MLEDISEEDI…RAGDHPFSSP (190 aa). Residues 15–76 form a disordered region; that stretch reads SKRKPKRVDP…LGNAGCQTSV (62 aa). The segment covering 53–65 has biased composition (basic and acidic residues); the sequence is RAAEAKEVKDHEV. The UBZ4-type zinc-finger motif lies at 119-149; that stretch reads DGYCPNCQMPFSSLIGQTPRWHVFECLDSPP. The Zn(2+) site is built by Cys-122, Cys-125, His-140, and Cys-144. Glycyl lysine isopeptide (Lys-Gly) (interchain with G-Cter in SUMO2) cross-links involve residues Lys-202, Lys-236, Lys-269, Lys-353, Lys-361, Lys-429, Lys-488, Lys-508, Lys-517, Lys-533, and Lys-536. The segment at 396 to 614 is nuclear focus formation; that stretch reads LPYDLACTGG…KSLSDLEFDA (219 aa). Disordered regions lie at residues 582 to 602 and 623 to 651; these read GINLNPVPSPNQKRSSQCKRK and SVELSSERSQRQKKRCRKSNSLQEGACQK. Ser-590 is modified (phosphoserine). Glycyl lysine isopeptide (Lys-Gly) (interchain with G-Cter in SUMO2) cross-links involve residues Lys-668, Lys-670, and Lys-674.

Belongs to the DNA repair metallo-beta-lactamase (DRMBL) family. Binds constitutively to TP53BP1. Binds CDC27, which is itself a component of the anaphase promoting complex (APC). Binds PIAS1. As to expression, expressed in brain, heart, kidney, liver, pancreas, placenta and skeletal muscle.

It is found in the nucleus. The catalysed reaction is a beta-lactam + H2O = a substituted beta-amino acid. With respect to regulation, beta-lactamase activity is inhibited by sulbactam. Its function is as follows. May be required for DNA interstrand cross-link repair. Also required for checkpoint mediated cell cycle arrest in early prophase in response to mitotic spindle poisons. Possesses beta-lactamase activity, catalyzing the hydrolysis of penicillin G and nitrocefin. Exhibits no activity towards other beta-lactam antibiotic classes including cephalosporins (cefotaxime) and carbapenems (imipenem). This chain is DNA cross-link repair 1A protein (DCLRE1A), found in Homo sapiens (Human).